The following is an 809-amino-acid chain: Probable disease resistance protein At5g66900 (809 aa).

Residues 1–150 (MNDWASLGIG…LSKRMDLLSV (150 aa)) enclose the RPW8 domain. Residues 50–86 (PLTQKIDSMQKELDFGVKELKELRDTIERADVAVRKF) adopt a coiled-coil conformation. NB-ARC domains are found at residues 153–280 (PVFR…DDVW) and 339–438 (SPDE…DMWV). 194-201 (APPGCGKT) contacts ATP. The stretch at 494–515 (QSEFKENLERKRLNLEILENTF) forms a coiled coil. LRR repeat units lie at residues 650–672 (KLQEIDIDYCYDLDELPYWISEI), 674–696 (SLKTLSITNCNKLSQLPEAIGNL), 698–720 (RLEVLRLCSSMNLSELPEATEGL), and 722–744 (NLRFLDISHCLGLRKLPQEIGKL).

The protein belongs to the disease resistance NB-LRR family.

Functionally, probable disease resistance protein. The sequence is that of Probable disease resistance protein At5g66900 from Arabidopsis thaliana (Mouse-ear cress).